Here is a 137-residue protein sequence, read N- to C-terminus: Nucleoside diphosphate kinase (137 aa).

ATP is bound by residues K9, F57, R85, T91, R102, and N112. The Pros-phosphohistidine intermediate role is filled by H115.

The protein belongs to the NDK family. Homotetramer. Mg(2+) is required as a cofactor.

The protein resides in the cytoplasm. It carries out the reaction a 2'-deoxyribonucleoside 5'-diphosphate + ATP = a 2'-deoxyribonucleoside 5'-triphosphate + ADP. The enzyme catalyses a ribonucleoside 5'-diphosphate + ATP = a ribonucleoside 5'-triphosphate + ADP. In terms of biological role, major role in the synthesis of nucleoside triphosphates other than ATP. The ATP gamma phosphate is transferred to the NDP beta phosphate via a ping-pong mechanism, using a phosphorylated active-site intermediate. This Geotalea daltonii (strain DSM 22248 / JCM 15807 / FRC-32) (Geobacter daltonii) protein is Nucleoside diphosphate kinase.